The following is a 361-amino-acid chain: Epi-isozizaene synthase (361 aa).

Residues Asp99, Asp103, Asn240, Ser244, and Glu248 each coordinate Mg(2+). The short motif at 99–103 (DDRHD) is the DDXXD motif element.

It belongs to the terpene synthase family. Mg(2+) is required as a cofactor. Mn(2+) serves as cofactor. Requires Fe(3+) as cofactor.

It catalyses the reaction (2E,6E)-farnesyl diphosphate = (+)-epi-isozizaene + diphosphate. It functions in the pathway sesquiterpene biosynthesis; epi-isozizaene biosynthesis. In terms of biological role, catalyzes the cyclization of farnesyl diphosphate (FPP) to the sesquiterpene epi-isozizaene. This chain is Epi-isozizaene synthase (cyc1), found in Streptomyces coelicolor (strain ATCC BAA-471 / A3(2) / M145).